The sequence spans 101 residues: Protein Tat (101 aa).

The interval 1 to 24 (MEPVDPRLEPWKHPGSQPKTACTN) is interaction with human CREBBP. Positions 1-48 (MEPVDPRLEPWKHPGSQPKTACTNCYCKKCCFHCQVCFITKGLGISYG) are transactivation. 3 residues coordinate Zn(2+): cysteine 22, cysteine 25, and cysteine 27. The cysteine-rich stretch occupies residues 22–37 (CTNCYCKKCCFHCQVC). At lysine 28 the chain carries N6-acetyllysine; by host PCAF. Zn(2+)-binding residues include cysteine 30, histidine 33, cysteine 34, and cysteine 37. Residues 38-48 (FITKGLGISYG) are core. Residues 48–57 (GRKKRRQRRR) are compositionally biased toward basic residues. The tract at residues 48 to 101 (GRKKRRQRRRAPPDSEVHQVSLPKQPASQPQGDPTGPKESKKKVERETETDPVH) is disordered. The Nuclear localization signal, RNA-binding (TAR), and protein transduction motif lies at 49 to 57 (RKKRRQRRR). The segment at 49–86 (RKKRRQRRRAPPDSEVHQVSLPKQPASQPQGDPTGPKE) is interaction with the host capping enzyme RNGTT. Residues lysine 50 and lysine 51 each carry the N6-acetyllysine; by host EP300 and GCN5L2 modification. Asymmetric dimethylarginine; by host PRMT6 is present on residues arginine 52 and arginine 53. A Glycyl lysine isopeptide (Lys-Gly) (interchain with G-Cter in ubiquitin) cross-link involves residue lysine 71. Residues 83–101 (GPKESKKKVERETETDPVH) are compositionally biased toward basic and acidic residues.

This sequence belongs to the lentiviruses Tat family. Interacts with host CCNT1. Associates with the P-TEFb complex composed at least of Tat, P-TEFb (CDK9 and CCNT1), TAR RNA, RNA Pol II. Recruits the HATs CREBBP, TAF1/TFIID, EP300, PCAF and GCN5L2. Interacts with host KAT5/Tip60; this interaction targets the latter to degradation. Interacts with the host deacetylase SIRT1. Interacts with host capping enzyme RNGTT; this interaction stimulates RNGTT. Binds to host KDR, and to the host integrins ITGAV/ITGB3 and ITGA5/ITGB1. Interacts with host KPNB1/importin beta-1 without previous binding to KPNA1/importin alpha-1. Interacts with EIF2AK2. Interacts with host nucleosome assembly protein NAP1L1; this interaction may be required for the transport of Tat within the nucleus, since the two proteins interact at the nuclear rim. Interacts with host C1QBP/SF2P32; this interaction involves lysine-acetylated Tat. Interacts with the host chemokine receptors CCR2, CCR3 and CXCR4. Interacts with host DPP4/CD26; this interaction may trigger an anti-proliferative effect. Interacts with host LDLR. Interacts with the host extracellular matrix metalloproteinase MMP1. Interacts with host PRMT6; this interaction mediates Tat's methylation. Interacts with, and is ubiquitinated by MDM2/Hdm2. Interacts with host PSMC3 and HTATIP2. Interacts with STAB1; this interaction may overcome SATB1-mediated repression of IL2 and IL2RA (interleukin) in T cells by binding to the same domain than HDAC1. Interacts (when acetylated) with human CDK13, thereby increasing HIV-1 mRNA splicing and promoting the production of the doubly spliced HIV-1 protein Nef. Interacts with host TBP; this interaction modulates the activity of transcriptional pre-initiation complex. Interacts with host RELA. Interacts with host PLSCR1; this interaction negatively regulates Tat transactivation activity by altering its subcellular distribution. Asymmetrical arginine methylation by host PRMT6 seems to diminish the transactivation capacity of Tat and affects the interaction with host CCNT1. Post-translationally, acetylation by EP300, CREBBP, GCN5L2/GCN5 and PCAF regulates the transactivation activity of Tat. EP300-mediated acetylation of Lys-50 promotes dissociation of Tat from the TAR RNA through the competitive binding to PCAF's bromodomain. In addition, the non-acetylated Tat's N-terminus can also interact with PCAF. PCAF-mediated acetylation of Lys-28 enhances Tat's binding to CCNT1. Lys-50 is deacetylated by SIRT1. In terms of processing, polyubiquitination by host MDM2 does not target Tat to degradation, but activates its transactivation function and fosters interaction with CCNT1 and TAR RNA. Phosphorylated by EIF2AK2 on serine and threonine residues adjacent to the basic region important for TAR RNA binding and function. Phosphorylation of Tat by EIF2AK2 is dependent on the prior activation of EIF2AK2 by dsRNA.

The protein localises to the host nucleus. It localises to the host nucleolus. Its subcellular location is the host cytoplasm. It is found in the secreted. Its function is as follows. Transcriptional activator that increases RNA Pol II processivity, thereby increasing the level of full-length viral transcripts. Recognizes a hairpin structure at the 5'-LTR of the nascent viral mRNAs referred to as the transactivation responsive RNA element (TAR) and recruits the cyclin T1-CDK9 complex (P-TEFb complex) that will in turn hyperphosphorylate the RNA polymerase II to allow efficient elongation. The CDK9 component of P-TEFb and other Tat-activated kinases hyperphosphorylate the C-terminus of RNA Pol II that becomes stabilized and much more processive. Other factors such as HTATSF1/Tat-SF1, SUPT5H/SPT5, and HTATIP2 are also important for Tat's function. Besides its effect on RNA Pol II processivity, Tat induces chromatin remodeling of proviral genes by recruiting the histone acetyltransferases (HATs) CREBBP, EP300 and PCAF to the chromatin. This also contributes to the increase in proviral transcription rate, especially when the provirus integrates in transcriptionally silent region of the host genome. To ensure maximal activation of the LTR, Tat mediates nuclear translocation of NF-kappa-B by interacting with host RELA. Through its interaction with host TBP, Tat may also modulate transcription initiation. Tat can reactivate a latently infected cell by penetrating in it and transactivating its LTR promoter. In the cytoplasm, Tat is thought to act as a translational activator of HIV-1 mRNAs. Functionally, extracellular circulating Tat can be endocytosed by surrounding uninfected cells via the binding to several surface receptors such as CD26, CXCR4, heparan sulfate proteoglycans (HSPG) or LDLR. Neurons are rarely infected, but they internalize Tat via their LDLR. Through its interaction with nuclear HATs, Tat is potentially able to control the acetylation-dependent cellular gene expression. Modulates the expression of many cellular genes involved in cell survival, proliferation or in coding for cytokines or cytokine receptors. Tat plays a role in T-cell and neurons apoptosis. Tat induced neurotoxicity and apoptosis probably contribute to neuroAIDS. Circulating Tat also acts as a chemokine-like and/or growth factor-like molecule that binds to specific receptors on the surface of the cells, affecting many cellular pathways. In the vascular system, Tat binds to ITGAV/ITGB3 and ITGA5/ITGB1 integrins dimers at the surface of endothelial cells and competes with bFGF for heparin-binding sites, leading to an excess of soluble bFGF. This chain is Protein Tat, found in Human immunodeficiency virus type 1 group M subtype B (isolate SF162) (HIV-1).